Consider the following 113-residue polypeptide: UPF0482 protein CKO_01577 (113 aa).

Positions 1–28 (MNNTLSKRLCLTAMLALGAVVYTTSAFA) are cleaved as a signal peptide. Residues 44-67 (RQHAAMEKEQWNDTRSLRQKVNTR) are disordered. The segment covering 47-59 (AAMEKEQWNDTRS) has biased composition (basic and acidic residues).

It belongs to the UPF0482 family.

This chain is UPF0482 protein CKO_01577, found in Citrobacter koseri (strain ATCC BAA-895 / CDC 4225-83 / SGSC4696).